The chain runs to 304 residues: Endonuclease III-like protein 1 (304 aa).

Residues 1-22 constitute a mitochondrion transit peptide; it reads MTALSARMLTRSRSLGPGAGPR. Residues 1 to 72 are disordered; that stretch reads MTALSARMLT…SDSEKGEGAE (72 aa). Residues 23–42 show a composition bias toward basic and acidic residues; that stretch reads GCREEPGPLRRREAAAEARK. The Bipartite nuclear localization signal motif lies at 28 to 52; sequence PGPLRRREAAAEARKSHSPVKRPRK. Positions 43-55 are enriched in basic residues; sequence SHSPVKRPRKAQR. Phosphoserine is present on residues Ser-63 and Ser-65. Residues 191-215 enclose the HhH domain; the sequence is HYGGDIPASVAELVALPGVGPKMAH. Lys-212 acts as the Nucleophile; for N-glycosylase activity in catalysis. [4Fe-4S] cluster-binding residues include Cys-282, Cys-289, Cys-292, and Cys-298.

Belongs to the Nth/MutY family. As to quaternary structure, interacts with YBX1. Interacts with ERCC5/XPG; the interaction stimulates NTHL1 activity and NTHL1 binding to its DNA substrate. [4Fe-4S] cluster is required as a cofactor. In terms of processing, ubiquitinated by TRIM26; leading to proteasomal degradation. In terms of tissue distribution, widely expressed with highest levels in heart and lowest levels in lung and liver.

Its subcellular location is the nucleus. It is found in the mitochondrion. It carries out the reaction 2'-deoxyribonucleotide-(2'-deoxyribose 5'-phosphate)-2'-deoxyribonucleotide-DNA = a 3'-end 2'-deoxyribonucleotide-(2,3-dehydro-2,3-deoxyribose 5'-phosphate)-DNA + a 5'-end 5'-phospho-2'-deoxyribonucleoside-DNA + H(+). With respect to regulation, APE1 displaces NTHL1 from the N-glycosylase-generated AP site in DNA, thereby increasing the turnover of the DNA N-glycosylase activity. AP lyase activity is stimulated by YBX1. ERCC5/XPG stimulates NTHL1 activity and NTHL1 binding to its DNA substrate. Its function is as follows. Bifunctional DNA N-glycosylase with associated apurinic/apyrimidinic (AP) lyase function that catalyzes the first step in base excision repair (BER), the primary repair pathway for the repair of oxidative DNA damage. The DNA N-glycosylase activity releases the damaged DNA base from DNA by cleaving the N-glycosidic bond, leaving an AP site. The AP-lyase activity cleaves the phosphodiester bond 3' to the AP site by a beta-elimination. Primarily recognizes and repairs oxidative base damage of pyrimidines. Also has 8-oxo-7,8-dihydroguanine (8-oxoG) DNA glycosylase activity. Acts preferentially on DNA damage opposite guanine residues in DNA. Is able to process lesions in nucleosomes without requiring or inducing nucleosome disruption. This chain is Endonuclease III-like protein 1, found in Homo sapiens (Human).